Reading from the N-terminus, the 152-residue chain is Deoxyuridine 5'-triphosphate nucleotidohydrolase (152 aa).

Residues 71–73 (RSG), Asn-84, and 88–90 (TID) each bind substrate.

It belongs to the dUTPase family. Mg(2+) serves as cofactor.

It carries out the reaction dUTP + H2O = dUMP + diphosphate + H(+). The protein operates within pyrimidine metabolism; dUMP biosynthesis; dUMP from dCTP (dUTP route): step 2/2. In terms of biological role, this enzyme is involved in nucleotide metabolism: it produces dUMP, the immediate precursor of thymidine nucleotides and it decreases the intracellular concentration of dUTP so that uracil cannot be incorporated into DNA. The protein is Deoxyuridine 5'-triphosphate nucleotidohydrolase of Roseobacter denitrificans (strain ATCC 33942 / OCh 114) (Erythrobacter sp. (strain OCh 114)).